A 363-amino-acid chain; its full sequence is MGKVKKEDIMDIVEKYDKSNITIATLGSHTALHILRGAKQEGFRTAVVCEKGKEVPYERFGVADEFIFVDEYKDIVNSDVQDKLRAMNAIVVPHGSFVAYAGLSNVEDKFNVPMFGNRDILRWEAERDKERKMITQSGIRMPRKFDKPEDINKEVMVKFPGARGGQGYFICSSYEEFQNKIQEMKERNWITDSDVKDAHIEEYVCGTNFCIHYFYSALKDEVEVLGMDSRYETNIDGIVRIPAQDQIEANLSPSYVVSGNHPVVIRESLLPQVFENGDRLVETAKKLVKPGMNGPFCLQCLVNDDREIVIFEMSARIDGGTNSFMNGSAYSYIQFGEVMSMGRRISREIKNAIETDKLDVILT.

5-amino-1-(5-phospho-beta-D-ribosyl)imidazole-4-carboxamide is bound by residues histidine 29 and serine 96. One can recognise an ATP-grasp domain in the interval 118–354 (RDILRWEAER…ISREIKNAIE (237 aa)). Residues 148-210 (PEDI…TNFC) and glutamate 232 each bind ATP. 5-amino-1-(5-phospho-beta-D-ribosyl)imidazole-4-carboxamide is bound at residue asparagine 260. Mg(2+)-binding residues include glutamine 299 and glutamate 312.

This sequence belongs to the phosphohexose mutase family. It depends on Mg(2+) as a cofactor. The cofactor is Mn(2+).

It carries out the reaction 5-amino-1-(5-phospho-beta-D-ribosyl)imidazole-4-carboxamide + formate + ATP = 5-formamido-1-(5-phospho-D-ribosyl)imidazole-4-carboxamide + ADP + phosphate. It participates in purine metabolism; IMP biosynthesis via de novo pathway; 5-formamido-1-(5-phospho-D-ribosyl)imidazole-4-carboxamide from 5-amino-1-(5-phospho-D-ribosyl)imidazole-4-carboxamide (formate route): step 1/1. Its function is as follows. Catalyzes the ATP- and formate-dependent formylation of 5-aminoimidazole-4-carboxamide-1-beta-d-ribofuranosyl 5'-monophosphate (AICAR) to 5-formaminoimidazole-4-carboxamide-1-beta-d-ribofuranosyl 5'-monophosphate (FAICAR) in the absence of folates. The polypeptide is 5-formaminoimidazole-4-carboxamide-1-(beta)-D-ribofuranosyl 5'-monophosphate synthetase (Methanosphaera stadtmanae (strain ATCC 43021 / DSM 3091 / JCM 11832 / MCB-3)).